The following is a 375-amino-acid chain: MLLFLLSALVLLTQPLGYLEAEMKTYSHRTMPSACTLVMCSSVESGLPGRDGRDGREGPRGEKGDPGLPGAAGQAGMPGQAGPVGPKGDNGSVGEPGPKGDTGPSGPPGPPGVPGPAGREGPLGKQGNIGPQGKPGPKGEAGPKGEVGAPGMQGSAGARGLAGPKGERGVPGERGVPGNTGAAGSAGAMGPQGSPGARGPPGLKGDKGIPGDKGAKGESGLPDVASLRQQVEALQGQVQHLQAAFSQYKKVELFPNGQSVGEKIFKTAGFVKPFTEAQLLCTQAGGQLASPRSAAENAALQQLVVAKNEAAFLSMTDSKTEGKFTYPTGESLVYSNWAPGEPNDDGGSEDCVEIFTNGKWNDRACGEKRLVVCEF.

An N-terminal signal peptide occupies residues 1–20 (MLLFLLSALVLLTQPLGYLE). C35 and C40 each carry S-nitrosocysteine. A disordered region spans residues 45-221 (SGLPGRDGRD…DKGAKGESGL (177 aa)). The region spanning 46–222 (GLPGRDGRDG…KGAKGESGLP (177 aa)) is the Collagen-like domain. The span at 50–65 (RDGRDGREGPRGEKGD) shows a compositional bias: basic and acidic residues. Residues 66–86 (PGLPGAAGQAGMPGQAGPVGP) are compositionally biased toward low complexity. P78 is subject to 4-hydroxyproline. Position 87 is a 5-hydroxylysine (K87). A glycan (N-linked (GlcNAc...) asparagine) is linked at N90. P96 carries the 4-hydroxyproline modification. K99 carries the post-translational modification 5-hydroxylysine. Over residues 105 to 114 (SGPPGPPGVP) the composition is skewed to pro residues. Low complexity-rich tracts occupy residues 116-132 (PAGR…IGPQ) and 138-150 (KGEA…VGAP). A 4-hydroxyproline mark is found at P171 and P177. Residues 204–216 (KGDKGIPGDKGAK) show a composition bias toward basic and acidic residues. Positions 223 to 252 (DVASLRQQVEALQGQVQHLQAAFSQYKKVE) form a coiled coil. The C-type lectin domain occupies 260-375 (VGEKIFKTAG…GEKRLVVCEF (116 aa)). 2 cysteine pairs are disulfide-bonded: C281-C373 and C351-C365.

It belongs to the SFTPD family. In terms of assembly, oligomeric complex of 4 set of homotrimers. Post-translationally, the N-terminus is blocked. Hydroxylation on proline residues within the sequence motif, GXPG, is most likely to be 4-hydroxy as this fits the requirement for 4-hydroxylation in vertebrates. In terms of processing, S-nitrosylation at Cys-35 and Cys-40 alters the quaternary structure which results in a pro-inflammatory chemoattractive signaling activity with macrophages. In terms of tissue distribution, expressed in lung, brain, pancreas and adipose tissue (mainly mature adipocytes).

It localises to the secreted. The protein resides in the extracellular space. It is found in the extracellular matrix. Its subcellular location is the surface film. Contributes to the lung's defense against inhaled microorganisms, organic antigens and toxins. Interacts with compounds such as bacterial lipopolysaccharides, oligosaccharides and fatty acids and modulates leukocyte action in immune response. May participate in the extracellular reorganization or turnover of pulmonary surfactant. Binds strongly maltose residues and to a lesser extent other alpha-glucosyl moieties. The polypeptide is Pulmonary surfactant-associated protein D (SFTPD) (Homo sapiens (Human)).